The primary structure comprises 180 residues: Calcineurin subunit B type 1 (180 aa).

Gly-2 carries the N-myristoyl glycine lipid modification. EF-hand domains are found at residues Ala-25–Pro-60, Leu-62–Lys-92, Thr-94–Thr-129, and Gln-135–Ile-170. Ca(2+) is bound by residues Asp-38, Asp-40, Ser-42, Thr-44, Glu-49, Asp-70, Asn-72, Asp-74, Glu-76, Glu-81, Asp-107, Asp-109, Asp-111, and Glu-118. The canA/calcineurin A binding stretch occupies residues Gln-138–Thr-143. The Ca(2+) site is built by Asp-148, Asp-150, Asp-152, Lys-154, and Glu-159.

Belongs to the calcineurin regulatory subunit family. As to quaternary structure, forms a complex composed of a calmodulin-dependent catalytic subunit canA (also known as calcineurin A) and a regulatory Ca(2+)-binding subunit cnbA (also known as calcineurin B).

Regulatory subunit of calcineurin, a calcium-dependent, calmodulin stimulated protein phosphatase. Confers calcium sensitivity. Important for stalk formation. This chain is Calcineurin subunit B type 1 (cnbA), found in Dictyostelium discoideum (Social amoeba).